Here is a 357-residue protein sequence, read N- to C-terminus: Outer membrane protein YedS (357 aa).

The N-terminal stretch at 1 to 21 (MKRKVLAMLVPALLVAGAANA) is a signal peptide.

This sequence belongs to the Gram-negative porin family.

It is found in the cell outer membrane. Functionally, forms pores that allow passive diffusion of small molecules across the outer membrane. Plays a role in resistance to carbapenems; this carbapenem-resistant, noncarbapenemase-producing clinical isolate has a deletion in ompF and a mutated marR gene that does not induce expression of this protein. However if this gene is overexpressed, or if wild-type marR is introduced, this leads to decreased resistance to the carbapenem antibiotics ertapenem, imipenem and meropenem. The sequence is that of Outer membrane protein YedS from Escherichia coli.